The sequence spans 410 residues: Translation initiation factor 2 subunit gamma (410 aa).

The tr-type G domain maps to 6-203 (QSEINIGMVG…AIEDLMPTPE (198 aa)). A G1 region spans residues 15 to 22 (GHVDHGKT). Residues Asp-18, Thr-22, Gly-43, and Ser-45 each coordinate Mg(2+). 18–23 (DHGKTS) lines the GTP pocket. Positions 43-47 (GISIR) are G2. 4 residues coordinate Zn(2+): Cys-58, Cys-61, Cys-73, and Cys-76. The segment at 90-93 (DAPG) is G3. GTP is bound by residues 146–149 (NKID) and 181–183 (SAH). The segment at 146–149 (NKID) is G4. Residues 181–183 (SAH) are G5.

This sequence belongs to the TRAFAC class translation factor GTPase superfamily. Classic translation factor GTPase family. EIF2G subfamily. Heterotrimer composed of an alpha, a beta and a gamma chain. It depends on Mg(2+) as a cofactor.

The catalysed reaction is GTP + H2O = GDP + phosphate + H(+). Its function is as follows. eIF-2 functions in the early steps of protein synthesis by forming a ternary complex with GTP and initiator tRNA. The chain is Translation initiation factor 2 subunit gamma from Methanococcus aeolicus (strain ATCC BAA-1280 / DSM 17508 / OCM 812 / Nankai-3).